The primary structure comprises 339 residues: Glucokinase (339 aa).

16–21 (GDIGGT) serves as a coordination point for ATP.

This sequence belongs to the bacterial glucokinase family.

It localises to the cytoplasm. The catalysed reaction is D-glucose + ATP = D-glucose 6-phosphate + ADP + H(+). This Sinorhizobium medicae (strain WSM419) (Ensifer medicae) protein is Glucokinase.